The chain runs to 356 residues: tRNA N6-adenosine threonylcarbamoyltransferase (356 aa).

Residues H114 and H118 each coordinate Fe cation. Substrate-binding positions include L136–G140, D169, G182, and N280. D308 is a Fe cation binding site. Residues A333–A356 form a disordered region.

This sequence belongs to the KAE1 / TsaD family. Fe(2+) is required as a cofactor.

The protein resides in the cytoplasm. It carries out the reaction L-threonylcarbamoyladenylate + adenosine(37) in tRNA = N(6)-L-threonylcarbamoyladenosine(37) in tRNA + AMP + H(+). Functionally, required for the formation of a threonylcarbamoyl group on adenosine at position 37 (t(6)A37) in tRNAs that read codons beginning with adenine. Is involved in the transfer of the threonylcarbamoyl moiety of threonylcarbamoyl-AMP (TC-AMP) to the N6 group of A37, together with TsaE and TsaB. TsaD likely plays a direct catalytic role in this reaction. This chain is tRNA N6-adenosine threonylcarbamoyltransferase, found in Dinoroseobacter shibae (strain DSM 16493 / NCIMB 14021 / DFL 12).